The following is a 443-amino-acid chain: ATP-dependent protease ATPase subunit HslU (443 aa).

Residues Val-18, 60-65 (GVGKTE), Asp-256, Glu-321, and Arg-393 each bind ATP.

Belongs to the ClpX chaperone family. HslU subfamily. As to quaternary structure, a double ring-shaped homohexamer of HslV is capped on each side by a ring-shaped HslU homohexamer. The assembly of the HslU/HslV complex is dependent on binding of ATP.

Its subcellular location is the cytoplasm. Functionally, ATPase subunit of a proteasome-like degradation complex; this subunit has chaperone activity. The binding of ATP and its subsequent hydrolysis by HslU are essential for unfolding of protein substrates subsequently hydrolyzed by HslV. HslU recognizes the N-terminal part of its protein substrates and unfolds these before they are guided to HslV for hydrolysis. The polypeptide is ATP-dependent protease ATPase subunit HslU (Azoarcus sp. (strain BH72)).